Here is a 174-residue protein sequence, read N- to C-terminus: Endoribonuclease YbeY (174 aa).

Zn(2+) contacts are provided by H129, H133, and H139.

It belongs to the endoribonuclease YbeY family. It depends on Zn(2+) as a cofactor.

It is found in the cytoplasm. Functionally, single strand-specific metallo-endoribonuclease involved in late-stage 70S ribosome quality control and in maturation of the 3' terminus of the 16S rRNA. The chain is Endoribonuclease YbeY from Lactobacillus helveticus (strain DPC 4571).